Here is a 124-residue protein sequence, read N- to C-terminus: Small ribosomal subunit protein uS13 (124 aa).

The disordered stretch occupies residues 94-124 (GLPLRGQRTKNNSRTRKGRRKTVANKKKATK). Residues 100–124 (QRTKNNSRTRKGRRKTVANKKKATK) show a composition bias toward basic residues.

It belongs to the universal ribosomal protein uS13 family. In terms of assembly, part of the 30S ribosomal subunit. Forms a loose heterodimer with protein S19. Forms two bridges to the 50S subunit in the 70S ribosome.

Functionally, located at the top of the head of the 30S subunit, it contacts several helices of the 16S rRNA. In the 70S ribosome it contacts the 23S rRNA (bridge B1a) and protein L5 of the 50S subunit (bridge B1b), connecting the 2 subunits; these bridges are implicated in subunit movement. Contacts the tRNAs in the A and P-sites. The polypeptide is Small ribosomal subunit protein uS13 (Christiangramia forsetii (strain DSM 17595 / CGMCC 1.15422 / KT0803) (Gramella forsetii)).